A 252-amino-acid polypeptide reads, in one-letter code: Imidazole glycerol phosphate synthase subunit HisF (252 aa).

Active-site residues include Asp-11 and Asp-130.

Belongs to the HisA/HisF family. As to quaternary structure, heterodimer of HisH and HisF.

It is found in the cytoplasm. The catalysed reaction is 5-[(5-phospho-1-deoxy-D-ribulos-1-ylimino)methylamino]-1-(5-phospho-beta-D-ribosyl)imidazole-4-carboxamide + L-glutamine = D-erythro-1-(imidazol-4-yl)glycerol 3-phosphate + 5-amino-1-(5-phospho-beta-D-ribosyl)imidazole-4-carboxamide + L-glutamate + H(+). It functions in the pathway amino-acid biosynthesis; L-histidine biosynthesis; L-histidine from 5-phospho-alpha-D-ribose 1-diphosphate: step 5/9. In terms of biological role, IGPS catalyzes the conversion of PRFAR and glutamine to IGP, AICAR and glutamate. The HisF subunit catalyzes the cyclization activity that produces IGP and AICAR from PRFAR using the ammonia provided by the HisH subunit. The sequence is that of Imidazole glycerol phosphate synthase subunit HisF from Acinetobacter baylyi (strain ATCC 33305 / BD413 / ADP1).